Here is a 1393-residue protein sequence, read N- to C-terminus: DNA-directed RNA polymerase subunit beta' (1393 aa).

Positions 72, 74, 87, and 90 each coordinate Zn(2+). Aspartate 463, aspartate 465, and aspartate 467 together coordinate Mg(2+). Positions 812, 887, 894, and 897 each coordinate Zn(2+).

It belongs to the RNA polymerase beta' chain family. In terms of assembly, the RNAP catalytic core consists of 2 alpha, 1 beta, 1 beta' and 1 omega subunit. When a sigma factor is associated with the core the holoenzyme is formed, which can initiate transcription. Mg(2+) is required as a cofactor. The cofactor is Zn(2+).

It carries out the reaction RNA(n) + a ribonucleoside 5'-triphosphate = RNA(n+1) + diphosphate. DNA-dependent RNA polymerase catalyzes the transcription of DNA into RNA using the four ribonucleoside triphosphates as substrates. The chain is DNA-directed RNA polymerase subunit beta' from Chlamydia abortus (strain DSM 27085 / S26/3) (Chlamydophila abortus).